The primary structure comprises 416 residues: Adenylosuccinate synthetase (416 aa).

GTP-binding positions include glycine 13–lysine 19 and glycine 41–threonine 43. The Proton acceptor role is filled by aspartate 14. Mg(2+) contacts are provided by aspartate 14 and glycine 41. IMP is bound by residues aspartate 14 to lysine 17, asparagine 39 to histidine 42, threonine 126, arginine 140, glutamine 220, threonine 235, and arginine 299. Residue histidine 42 is the Proton donor of the active site. Threonine 295–arginine 301 is a substrate binding site. Residues arginine 301, lysine 327–aspartate 329, and serine 405–serine 407 contribute to the GTP site.

Belongs to the adenylosuccinate synthetase family. As to quaternary structure, homodimer. Mg(2+) serves as cofactor.

The protein localises to the cytoplasm. It carries out the reaction IMP + L-aspartate + GTP = N(6)-(1,2-dicarboxyethyl)-AMP + GDP + phosphate + 2 H(+). It functions in the pathway purine metabolism; AMP biosynthesis via de novo pathway; AMP from IMP: step 1/2. Functionally, plays an important role in the de novo pathway of purine nucleotide biosynthesis. Catalyzes the first committed step in the biosynthesis of AMP from IMP. This chain is Adenylosuccinate synthetase, found in Sulfurovum sp. (strain NBC37-1).